Here is a 528-residue protein sequence, read N- to C-terminus: Peptide chain release factor 3 (528 aa).

The 269-residue stretch at 10-278 folds into the tr-type G domain; the sequence is DKRRTFGIIS…TFVDLAPAPQ (269 aa). GTP contacts are provided by residues 19 to 26, 87 to 91, and 141 to 144; these read SHPDAGKT, DTPGH, and NKLD.

This sequence belongs to the TRAFAC class translation factor GTPase superfamily. Classic translation factor GTPase family. PrfC subfamily.

It is found in the cytoplasm. Functionally, increases the formation of ribosomal termination complexes and stimulates activities of RF-1 and RF-2. It binds guanine nucleotides and has strong preference for UGA stop codons. It may interact directly with the ribosome. The stimulation of RF-1 and RF-2 is significantly reduced by GTP and GDP, but not by GMP. The protein is Peptide chain release factor 3 of Oleidesulfovibrio alaskensis (strain ATCC BAA-1058 / DSM 17464 / G20) (Desulfovibrio alaskensis).